A 405-amino-acid chain; its full sequence is Solute carrier family 35 member E2B (405 aa).

The disordered stretch occupies residues 1-28 (MSSSVKTPALEELVPGSEEKPKGRSPLS). A run of 10 helical transmembrane segments spans residues 81 to 101 (LWFFFSFCTLFLNKYILSLLG), 106 to 126 (MLGAVQMLSTTVIGCVKTLVP), 142 to 162 (FLMTMLFVGLMRFATVVLGLV), 167 to 187 (VAVSFAETVKSSAPIFTVIMS), 195 to 215 (TGLLVNLSLIPVMGGLALCTA), 219 to 241 (SFNVLGFSAALSTNIMDCLQNVF), 264 to 284 (AAAVAMLVPARVFFTDVPVIG), 296 to 316 (VVLLLLTDGVLFHLQSVTAYA), 326 to 346 (FSVASTVKHALSIWLSVIVFG), and 347 to 367 (NKITSLSAVGTALVTVGVLLY). The tract at residues 380 to 405 (SLAAATGRAPDDTVEPLLPQDPRQHP) is disordered.

This sequence belongs to the TPT transporter family. SLC35E subfamily.

It localises to the membrane. In terms of biological role, putative transporter. In Homo sapiens (Human), this protein is Solute carrier family 35 member E2B (SLC35E2B).